A 204-amino-acid chain; its full sequence is MIGRLQGILLEKQPPEILLNVQGVGYELLLPMTSFYDLPEIGQETTLFTHLVVREDAHLLFGFAQKTDRTLFRELIKTNGVGPKLALAILSAMSVEQFAYAIEREELSKLTKIPGVGKKTAERLLVELKGKFKGVKQSDFFVESTHIPLSPSIESHSESSSDEAISALIALGYKPVEAEKMVKRVAKPELTSEQVIREALKAAL.

The interval Met-1–Ala-64 is domain I. Residues Gln-65 to Glu-143 form a domain II region. The interval Ser-144–Ser-155 is flexible linker. The domain III stretch occupies residues His-156–Leu-204.

The protein belongs to the RuvA family. As to quaternary structure, homotetramer. Forms an RuvA(8)-RuvB(12)-Holliday junction (HJ) complex. HJ DNA is sandwiched between 2 RuvA tetramers; dsDNA enters through RuvA and exits via RuvB. An RuvB hexamer assembles on each DNA strand where it exits the tetramer. Each RuvB hexamer is contacted by two RuvA subunits (via domain III) on 2 adjacent RuvB subunits; this complex drives branch migration. In the full resolvosome a probable DNA-RuvA(4)-RuvB(12)-RuvC(2) complex forms which resolves the HJ.

It is found in the cytoplasm. Functionally, the RuvA-RuvB-RuvC complex processes Holliday junction (HJ) DNA during genetic recombination and DNA repair, while the RuvA-RuvB complex plays an important role in the rescue of blocked DNA replication forks via replication fork reversal (RFR). RuvA specifically binds to HJ cruciform DNA, conferring on it an open structure. The RuvB hexamer acts as an ATP-dependent pump, pulling dsDNA into and through the RuvAB complex. HJ branch migration allows RuvC to scan DNA until it finds its consensus sequence, where it cleaves and resolves the cruciform DNA. The polypeptide is Holliday junction branch migration complex subunit RuvA (Haemophilus influenzae (strain PittEE)).